The primary structure comprises 213 residues: Glycerol-3-phosphate acyltransferase (213 aa).

Transmembrane regions (helical) follow at residues 3–23 (IIILLLIASYLLGAIPFGLWI), 48–68 (ILGVKAGIAVFIFDLLKGTLA), 71–91 (LPLIFHINGVSPLIFGLLAVI), 119–139 (PFFLLYLLVIFILVLWLFSMI), 144–164 (VVAAIFALLGILIFPSFGFIL), and 165–185 (TSYDLLFSIIIFALAIIIIFR).

It belongs to the PlsY family. As to quaternary structure, probably interacts with PlsX.

It localises to the cell membrane. The catalysed reaction is an acyl phosphate + sn-glycerol 3-phosphate = a 1-acyl-sn-glycero-3-phosphate + phosphate. It participates in lipid metabolism; phospholipid metabolism. Functionally, catalyzes the transfer of an acyl group from acyl-phosphate (acyl-PO(4)) to glycerol-3-phosphate (G3P) to form lysophosphatidic acid (LPA). This enzyme utilizes acyl-phosphate as fatty acyl donor, but not acyl-CoA or acyl-ACP. The protein is Glycerol-3-phosphate acyltransferase of Lactococcus lactis subsp. cremoris (strain SK11).